Reading from the N-terminus, the 254-residue chain is Trypsin (254 aa).

The first 16 residues, 1 to 16, serve as a signal peptide directing secretion; sequence MLRFIAVFALVNCALA. Residues 17-26 constitute a propeptide, activation peptide; that stretch reads GTLPNDLDGR. Positions 27 to 252 constitute a Peptidase S1 domain; it reads IVNGVDTTIE…VRSWIEKTAK (226 aa). Residues cysteine 53 and cysteine 69 are joined by a disulfide bond. Residues histidine 68 and aspartate 113 each act as charge relay system in the active site. 3 disulfides stabilise this stretch: cysteine 154–cysteine 158, cysteine 178–cysteine 195, and cysteine 204–cysteine 228. Serine 208 serves as the catalytic Charge relay system.

This sequence belongs to the peptidase S1 family.

The protein localises to the secreted. Its subcellular location is the extracellular space. The enzyme catalyses Preferential cleavage: Arg-|-Xaa, Lys-|-Xaa.. Functionally, involved in digestion of a protein meal. The chain is Trypsin from Sarcophaga bullata (Grey flesh fly).